The following is a 278-amino-acid chain: Elongation factor Ts 1, mitochondrial (278 aa).

It belongs to the EF-Ts family.

Its subcellular location is the mitochondrion. Associates with the EF-Tu.GDP complex and induces the exchange of GDP to GTP. It remains bound to the aminoacyl-tRNA.EF-Tu.GTP complex up to the GTP hydrolysis stage on the ribosome. This Trypanosoma cruzi (strain CL Brener) protein is Elongation factor Ts 1, mitochondrial.